A 235-amino-acid polypeptide reads, in one-letter code: MTAREKLIVGLDVPTVQQAEDIVSKIGDEVLFYKIGYQLVFAGGLEFARDLVQSGKKVFLDMKLLDIDNTVASGVENIARMGMSMLTLHAYPKAMRAAVKAAEGSGLCLLGVTVLTSMDDSDLVEAGYASDARSLVLRRAEQAREAGMGGIVCSAEESTAVREILGPDLAVVTPGIRPAGADLGDQKRVMTPYDAIKAGSSHLVVARPIVRAEDPKAAARAILDDMLRASFPANQ.

Residues D12, K34, 61 to 70 (DMKLLDIDNT), T116, R177, Q186, and R207 contribute to the substrate site. K63 functions as the Proton donor in the catalytic mechanism.

The protein belongs to the OMP decarboxylase family. Type 1 subfamily. As to quaternary structure, homodimer.

The enzyme catalyses orotidine 5'-phosphate + H(+) = UMP + CO2. Its pathway is pyrimidine metabolism; UMP biosynthesis via de novo pathway; UMP from orotate: step 2/2. Catalyzes the decarboxylation of orotidine 5'-monophosphate (OMP) to uridine 5'-monophosphate (UMP). The chain is Orotidine 5'-phosphate decarboxylase from Agrobacterium fabrum (strain C58 / ATCC 33970) (Agrobacterium tumefaciens (strain C58)).